The chain runs to 582 residues: Insulin-like growth factor 2 mRNA-binding protein 3 (582 aa).

RRM domains follow at residues 2-75 and 81-156; these read NKLY…HSVP and CKLQ…YIPD. Residues 164–190 are disordered; it reads PAVGGRRGFNPRGPPRQGSPSLGARPK. Ser182 is modified (phosphoserine). 4 KH domains span residues 194 to 259, 275 to 342, 408 to 473, and 490 to 556; these read DVPL…CRNI, EIPL…EEEI, SETV…QGRI, and KLEA…QRKI. Residues 562-582 form a disordered region; the sequence is QVRRQQQPKPSAAGPPVARRK.

Belongs to the RRM IMP/VICKZ family. As to quaternary structure, homodimer and multimer.

It is found in the cytoplasm. The protein resides in the nucleus. The protein localises to the P-body. Its subcellular location is the stress granule. RNA-binding factor that may recruit target transcripts to cytoplasmic protein-RNA complexes (mRNPs). This transcript 'caging' into mRNPs allows mRNA transport and transient storage. It also modulates the rate and location at which target transcripts encounter the translational apparatus and shields them from endonuclease attacks or microRNA-mediated degradation. Preferentially binds to N6-methyladenosine (m6A)-containing mRNAs and increases their stability. Involved in neuronal crest migration. The sequence is that of Insulin-like growth factor 2 mRNA-binding protein 3 (igf2bp3) from Danio rerio (Zebrafish).